Consider the following 87-residue polypeptide: Chaperone NapD (87 aa).

It belongs to the NapD family. In terms of assembly, interacts with the cytoplasmic NapA precursor.

The protein localises to the cytoplasm. Its function is as follows. Chaperone for NapA, the catalytic subunit of the periplasmic nitrate reductase. It binds directly and specifically to the twin-arginine signal peptide of NapA, preventing premature interaction with the Tat translocase and premature export. This is Chaperone NapD from Escherichia coli O157:H7.